The following is a 256-amino-acid chain: Homeobox protein TGIF2LX (256 aa).

Positions 1 to 45 (MEAAADSPAETRSRVEKDSRRVEKDSRRPKKDSPAKTQSPAQDTS) are disordered. Residues 9 to 34 (AETRSRVEKDSRRVEKDSRRPKKDSP) are compositionally biased toward basic and acidic residues. The span at 35-45 (AKTQSPAQDTS) shows a compositional bias: polar residues. The homeobox; TALE-type DNA-binding region spans 62–125 (EHKKKRKGYL…INARRRILPD (64 aa)). A disordered region spans residues 136-224 (VGHKTGKDAN…SSSPEPVSTE (89 aa)). A compositionally biased stretch (polar residues) spans 166 to 179 (DNVQSLPLRSSPKG). The segment covering 209–224 (VSNITSSSSPEPVSTE) has biased composition (low complexity).

Belongs to the TALE/TGIF homeobox family.

It localises to the nucleus. Its function is as follows. May have a transcription role in testis. This Papio hamadryas (Hamadryas baboon) protein is Homeobox protein TGIF2LX (TGIF2LX).